The chain runs to 1411 residues: Nuclear pore complex protein Nup160 homolog (1411 aa).

As to quaternary structure, part of the nuclear pore complex. Interacts with Nup98.

Its subcellular location is the nucleus. The protein resides in the nuclear pore complex. In terms of biological role, functions as a component of the nuclear pore complex (NPC). Involved in poly(A)+ RNA transport. Required for nuclear import of Mad. May play a role in double strand break DNA repair. Essential for nephrocyte development. This Drosophila melanogaster (Fruit fly) protein is Nuclear pore complex protein Nup160 homolog (Nup160).